A 127-amino-acid chain; its full sequence is Glycine cleavage system H protein 1 (127 aa).

The 82-residue stretch at 20–101 folds into the Lipoyl-binding domain; sequence SVTVGITAYA…MGEGWFFRFI (82 aa). Residue K60 is modified to N6-lipoyllysine.

Belongs to the GcvH family. As to quaternary structure, the glycine cleavage system is composed of four proteins: P, T, L and H. (R)-lipoate serves as cofactor.

Its function is as follows. The glycine cleavage system catalyzes the degradation of glycine. The H protein shuttles the methylamine group of glycine from the P protein to the T protein. The chain is Glycine cleavage system H protein 1 from Pseudomonas putida (strain ATCC 47054 / DSM 6125 / CFBP 8728 / NCIMB 11950 / KT2440).